The following is a 613-amino-acid chain: Probable indole-3-acetic acid-amido synthetase GH3.12 (613 aa).

Belongs to the IAA-amido conjugating enzyme family. As to expression, expressed in roots.

May catalyze the synthesis of indole-3-acetic acid (IAA)-amino acid conjugates, providing a mechanism for the plant to cope with the presence of excess auxin. This chain is Probable indole-3-acetic acid-amido synthetase GH3.12 (GH3.12), found in Oryza sativa subsp. japonica (Rice).